Consider the following 469-residue polypeptide: Glutamate--tRNA ligase (469 aa).

The 'HIGH' region signature appears at 9–19; that stretch reads PSPTGYLHVGG. Positions 98, 100, 125, and 127 each coordinate Zn(2+). Residues 237–241 carry the 'KMSKS' region motif; it reads KLSKR. Lys-240 lines the ATP pocket.

Belongs to the class-I aminoacyl-tRNA synthetase family. Glutamate--tRNA ligase type 1 subfamily. As to quaternary structure, monomer. Requires Zn(2+) as cofactor.

It localises to the cytoplasm. The enzyme catalyses tRNA(Glu) + L-glutamate + ATP = L-glutamyl-tRNA(Glu) + AMP + diphosphate. In terms of biological role, catalyzes the attachment of glutamate to tRNA(Glu) in a two-step reaction: glutamate is first activated by ATP to form Glu-AMP and then transferred to the acceptor end of tRNA(Glu). The sequence is that of Glutamate--tRNA ligase from Erwinia tasmaniensis (strain DSM 17950 / CFBP 7177 / CIP 109463 / NCPPB 4357 / Et1/99).